We begin with the raw amino-acid sequence, 564 residues long: Arginine--tRNA ligase (564 aa).

The 'HIGH' region signature appears at 122–132 (PNIAKPFSIGH).

This sequence belongs to the class-I aminoacyl-tRNA synthetase family. Monomer.

It is found in the cytoplasm. The enzyme catalyses tRNA(Arg) + L-arginine + ATP = L-arginyl-tRNA(Arg) + AMP + diphosphate. The polypeptide is Arginine--tRNA ligase (Lactococcus lactis subsp. cremoris (strain MG1363)).